The chain runs to 552 residues: Chaperonin GroEL (552 aa).

ATP is bound by residues 30–33 (TLGP), lysine 51, 87–91 (DGTTT), glycine 415, 480–482 (NAA), and aspartate 496.

The protein belongs to the chaperonin (HSP60) family. Forms a cylinder of 14 subunits composed of two heptameric rings stacked back-to-back. Interacts with the co-chaperonin GroES.

The protein localises to the cytoplasm. It carries out the reaction ATP + H2O + a folded polypeptide = ADP + phosphate + an unfolded polypeptide.. In terms of biological role, together with its co-chaperonin GroES, plays an essential role in assisting protein folding. The GroEL-GroES system forms a nano-cage that allows encapsulation of the non-native substrate proteins and provides a physical environment optimized to promote and accelerate protein folding. This Coxiella burnetii (strain RSA 493 / Nine Mile phase I) protein is Chaperonin GroEL.